A 507-amino-acid polypeptide reads, in one-letter code: RNA-binding protein Nova-1 (507 aa).

A disordered region spans residues 1 to 44 (MMAAAPIQQNGTHTGVPIDLDPPDSRKRPLEAPPEAGSTKRTNT). The Bipartite nuclear localization signal motif lies at 27 to 43 (KRPLEAPPEAGSTKRTN). The 68-residue stretch at 49-116 (QYFLKVLIPS…EALNAVHGFI (68 aa)) folds into the KH 1 domain. Residues 139–171 (QTTVNPDRIKQTLPSSPTTTKSSPSDPMTTSRA) form a disordered region. Residues 150–169 (TLPSSPTTTKSSPSDPMTTS) show a composition bias toward low complexity. Ser-154 bears the Phosphoserine mark. KH domains lie at 171 to 237 (ANQV…VELI) and 421 to 488 (KDVV…QYLI). The interval 419-503 (GSKDVVEIAV…YEQGVRAANP (85 aa)) is required for RNA binding.

In terms of assembly, interacts with PTBP2; the interaction is direct. In terms of tissue distribution, expressed in cerebellum, brain stem, hippocampus, and frontal cortex.

The protein localises to the nucleus. In terms of biological role, functions to regulate alternative splicing in neurons by binding pre-mRNA in a sequence-specific manner to activate exon inclusion or exclusion. It binds specifically to the sequences 5'-YCAY-3' and regulates splicing in only a subset of regulated exons. Binding to an exonic 5'-YCAY-3' cluster changes the protein complexes assembled on pre-mRNA, blocking U1 snRNP binding and exon inclusion, whereas binding to an intronic 5'-YCAY-3' cluster enhances spliceosome assembly and exon inclusion. Binding to 5'-YCAY-3' clusters results in a local and asymmetric action to regulate spliceosome assembly and alternative splicing in neurons. Binding to an exonic 5'-YCAY-3' cluster changed the protein complexes assembled on pre-mRNA, blocking U1 snRNP (small nuclear ribonucleoprotein) binding and exon inclusion, whereas binding to an intronic 5'-YCAY-3' cluster enhanced spliceosome assembly and exon inclusion. With NOVA1, they perform unique biological functions in different brain areas and cell types. Autoregulates its own expression by acting as a splicing repressor. Acts to activate the inclusion of exon E3A in the glycine receptor alpha-2 chain and of exon E9 in gamma-aminobutyric-acid receptor gamma-2 subunit via a distal downstream UCAU-rich intronic splicing enhancer. Acts to regulate a novel glycine receptor alpha-2 chain splice variant (alpha-2N) in developing spinal cord. This Homo sapiens (Human) protein is RNA-binding protein Nova-1.